The following is a 129-amino-acid chain: MAKQPTRARKRVRKQVADGVAHIHASFNNTIVTITDRQGNALAWATAGGSGFRGSRKSTPFAAQVAAERCGEMAKEYGVKNLEVMVKGPGPGRESTIRALNAAGYRITNIVDATPIPHNGCRPPKKRRV.

The protein belongs to the universal ribosomal protein uS11 family. Part of the 30S ribosomal subunit. Interacts with proteins S7 and S18. Binds to IF-3.

In terms of biological role, located on the platform of the 30S subunit, it bridges several disparate RNA helices of the 16S rRNA. Forms part of the Shine-Dalgarno cleft in the 70S ribosome. The polypeptide is Small ribosomal subunit protein uS11 (Aliivibrio fischeri (strain ATCC 700601 / ES114) (Vibrio fischeri)).